Consider the following 295-residue polypeptide: UDP-N-acetylenolpyruvoylglucosamine reductase (295 aa).

The 165-residue stretch at 24–188 folds into the FAD-binding PCMH-type domain; the sequence is KVGGNAEIFF…LKVVFKINKG (165 aa). Residue arginine 168 is part of the active site. The active-site Proton donor is the serine 217. Glutamate 287 is an active-site residue.

It belongs to the MurB family. FAD serves as cofactor.

The protein resides in the cytoplasm. The enzyme catalyses UDP-N-acetyl-alpha-D-muramate + NADP(+) = UDP-N-acetyl-3-O-(1-carboxyvinyl)-alpha-D-glucosamine + NADPH + H(+). It functions in the pathway cell wall biogenesis; peptidoglycan biosynthesis. Its function is as follows. Cell wall formation. The sequence is that of UDP-N-acetylenolpyruvoylglucosamine reductase from Rickettsia peacockii (strain Rustic).